A 247-amino-acid polypeptide reads, in one-letter code: tRNA pseudouridine synthase A (247 aa).

Catalysis depends on D52, which acts as the Nucleophile. Y113 lines the substrate pocket.

Belongs to the tRNA pseudouridine synthase TruA family. Homodimer.

It carries out the reaction uridine(38/39/40) in tRNA = pseudouridine(38/39/40) in tRNA. Its function is as follows. Formation of pseudouridine at positions 38, 39 and 40 in the anticodon stem and loop of transfer RNAs. The protein is tRNA pseudouridine synthase A of Bartonella tribocorum (strain CIP 105476 / IBS 506).